The sequence spans 175 residues: Threonylcarbamoyl-AMP synthase (175 aa).

A YrdC-like domain is found at 1-175 (MLHNDDVIAY…IINGKLIRYV (175 aa)).

It belongs to the SUA5 family. TsaC subfamily.

The protein localises to the cytoplasm. The enzyme catalyses L-threonine + hydrogencarbonate + ATP = L-threonylcarbamoyladenylate + diphosphate + H2O. Functionally, required for the formation of a threonylcarbamoyl group on adenosine at position 37 (t(6)A37) in tRNAs that read codons beginning with adenine. Catalyzes the conversion of L-threonine, HCO(3)(-)/CO(2) and ATP to give threonylcarbamoyl-AMP (TC-AMP) as the acyladenylate intermediate, with the release of diphosphate. The sequence is that of Threonylcarbamoyl-AMP synthase from Buchnera aphidicola subsp. Acyrthosiphon pisum (strain APS) (Acyrthosiphon pisum symbiotic bacterium).